The primary structure comprises 386 residues: Cytochrome b (386 aa).

A run of 4 helical transmembrane segments spans residues 32-52 (FGSL…TLAM), 76-98 (WMIR…LHIG), 113-133 (PWSI…LGYV), and 179-199 (FFSL…MHLL). Positions 82 and 96 each coordinate heme b. Heme b-binding residues include H183 and H197. H202 is a binding site for a ubiquinone. 4 helical membrane-spanning segments follow: residues 225 to 245 (YTFK…LFLF), 289 to 309 (LGGV…PLLD), 321 to 341 (LMKF…WCGS), and 348 to 368 (FITL…IIVP).

It belongs to the cytochrome b family. As to quaternary structure, fungal cytochrome b-c1 complex contains 10 subunits; 3 respiratory subunits, 2 core proteins and 5 low-molecular weight proteins. Cytochrome b-c1 complex is a homodimer. It depends on heme b as a cofactor.

Its subcellular location is the mitochondrion inner membrane. Its function is as follows. Component of the ubiquinol-cytochrome c reductase complex (complex III or cytochrome b-c1 complex) that is part of the mitochondrial respiratory chain. The b-c1 complex mediates electron transfer from ubiquinol to cytochrome c. Contributes to the generation of a proton gradient across the mitochondrial membrane that is then used for ATP synthesis. The chain is Cytochrome b (cob) from Rhizopus oryzae (Mucormycosis agent).